Reading from the N-terminus, the 371-residue chain is uncharacterized protein (371 aa).

The 31-residue stretch at 110-140 (MEKFIDFDRCNKCGECARKICKAKWTPLNYL) folds into the 4Fe-4S ferredoxin-type domain.

This is an uncharacterized protein from Methanocaldococcus jannaschii (strain ATCC 43067 / DSM 2661 / JAL-1 / JCM 10045 / NBRC 100440) (Methanococcus jannaschii).